The following is a 325-amino-acid chain: Beta-ketoacyl-[acyl-carrier-protein] synthase III (325 aa).

Catalysis depends on residues C119 and H252. Positions 253 to 257 are ACP-binding; the sequence is QANIR. N282 is a catalytic residue.

Belongs to the thiolase-like superfamily. FabH family. As to quaternary structure, homodimer.

The protein resides in the cytoplasm. The catalysed reaction is malonyl-[ACP] + acetyl-CoA + H(+) = 3-oxobutanoyl-[ACP] + CO2 + CoA. It functions in the pathway lipid metabolism; fatty acid biosynthesis. Catalyzes the condensation reaction of fatty acid synthesis by the addition to an acyl acceptor of two carbons from malonyl-ACP. Catalyzes the first condensation reaction which initiates fatty acid synthesis and may therefore play a role in governing the total rate of fatty acid production. Possesses both acetoacetyl-ACP synthase and acetyl transacylase activities. Its substrate specificity determines the biosynthesis of branched-chain and/or straight-chain of fatty acids. The polypeptide is Beta-ketoacyl-[acyl-carrier-protein] synthase III (Delftia acidovorans (strain DSM 14801 / SPH-1)).